A 478-amino-acid chain; its full sequence is 3-isopropylmalate dehydratase large subunit (478 aa).

3 residues coordinate [4Fe-4S] cluster: Cys359, Cys420, and Cys423.

The protein belongs to the aconitase/IPM isomerase family. LeuC type 1 subfamily. As to quaternary structure, heterodimer of LeuC and LeuD. It depends on [4Fe-4S] cluster as a cofactor.

The catalysed reaction is (2R,3S)-3-isopropylmalate = (2S)-2-isopropylmalate. It participates in amino-acid biosynthesis; L-leucine biosynthesis; L-leucine from 3-methyl-2-oxobutanoate: step 2/4. In terms of biological role, catalyzes the isomerization between 2-isopropylmalate and 3-isopropylmalate, via the formation of 2-isopropylmaleate. In Psychrobacter sp. (strain PRwf-1), this protein is 3-isopropylmalate dehydratase large subunit.